The following is a 223-amino-acid chain: Killer cell lectin-like receptor subfamily B member 1A (223 aa).

Over 1–43 the chain is Cytoplasmic; sequence MDTARVYLSLKPSKTAAGAQCVSPPSLPPDACRCPRSHRLALK. The LCK-binding motif signature appears at 32-35; the sequence is CRCP. Residues 44-63 traverse the membrane as a helical; Signal-anchor for type II membrane protein segment; it reads LSCAGLILLVLALVGMSILV. The Extracellular segment spans residues 64–223; sequence RVLVQKPSVE…LKCECMCNDS (160 aa). The C-type lectin domain maps to 93 to 212; the sequence is KCPKDWLSHR…DSDNIWVCQK (120 aa). Disulfide bonds link Cys-94-Cys-105, Cys-122-Cys-210, and Cys-189-Cys-202.

In terms of assembly, homodimer; disulfide-linked. Interacts with tyrosine kinase LCK. Expressed in natural killer cells.

Its subcellular location is the membrane. Functionally, plays a stimulatory role on natural killer (NK) cell cytotoxicity. In Rattus norvegicus (Rat), this protein is Killer cell lectin-like receptor subfamily B member 1A (Klrb1a).